The chain runs to 517 residues: Protein BTN1 (517 aa).

The next 8 helical transmembrane spans lie at 24–44 (LFAAFMIFGLLNNVLYVIILS), 57–77 (GVVALFNIFPALITKVVWPLL), 88–108 (VGFCTICSWFGIITIALSSSL), 112–132 (LLGISLASLSSGMGELTFLQL), 146–166 (LGAWSSGTGFAGVAGAGIWWL), 169–189 (GLGVKGGLGLSSFLPLFFPIT), 371–391 (PAIIQFLVLSLLFLQAKTFFF), and 409–429 (SITIVFLLICLEGLCGGSGYV).

This sequence belongs to the battenin family.

Its subcellular location is the vacuole membrane. Functionally, involved in vacuolar transport and vacuole pH homeostasis. Also required for cytokinesis. This Cryptococcus neoformans var. neoformans serotype D (strain B-3501A) (Filobasidiella neoformans) protein is Protein BTN1 (BTN1).